A 78-amino-acid chain; its full sequence is Large ribosomal subunit protein bL28 (78 aa).

Positions 1-33 (MARKDDVTGEGPVTGNSVSDSNQKTNRRFKRNL) are disordered. A compositionally biased stretch (polar residues) spans 14–24 (TGNSVSDSNQK).

This sequence belongs to the bacterial ribosomal protein bL28 family.

This chain is Large ribosomal subunit protein bL28, found in Salinibacter ruber (strain DSM 13855 / M31).